A 337-amino-acid chain; its full sequence is 2-oxoglutarate-Fe(II) type oxidoreductase (337 aa).

The region spanning 179–282 (AIATLRYLHY…RYSIPFFFTG (104 aa)) is the Fe2OG dioxygenase domain. Positions 205, 207, and 263 each coordinate Fe cation. Position 273 (arginine 273) interacts with 2-oxoglutarate.

Belongs to the iron/ascorbate-dependent oxidoreductase family. It depends on Fe(2+) as a cofactor. Endocrocin is specifically produced in conidia.

It participates in secondary metabolite biosynthesis. Its function is as follows. 2-oxoglutarate-Fe(II) type oxidoreductase; part of the gene cluster that mediates the biosynthesis of endocrocin, a simple anthraquinone interesting for many biotechnological applications. The pathway begins with the synthesis of atrochrysone thioester by the polyketide synthase (PKS) encA. The atrochrysone carboxyl ACP thioesterase encB then breaks the thioester bond and releases the atrochrysone carboxylic acid from encA. The atrochrysone carboxylic acid is then converted to endocrocin anthrone which is further oxidized into endocrocin by encC. The exact function of encD has not been identified yet, but it negatively regulates endocrocin production, likely through the modification of endocrocin itself. In Aspergillus fumigatus (strain ATCC MYA-4609 / CBS 101355 / FGSC A1100 / Af293) (Neosartorya fumigata), this protein is 2-oxoglutarate-Fe(II) type oxidoreductase.